The sequence spans 101 residues: NADH-quinone oxidoreductase subunit K (101 aa).

The next 3 membrane-spanning stretches (helical) occupy residues 4–24 (LAHYLVLGAVLFAISIVGIFL), 30–50 (IVLLMAIELMLLAVNMNFVAF), and 61–81 (VFVFFILTVAAAESAIGLAIL).

The protein belongs to the complex I subunit 4L family. NDH-1 is composed of 14 different subunits. Subunits NuoA, H, J, K, L, M, N constitute the membrane sector of the complex.

The protein resides in the cell inner membrane. It carries out the reaction a quinone + NADH + 5 H(+)(in) = a quinol + NAD(+) + 4 H(+)(out). In terms of biological role, NDH-1 shuttles electrons from NADH, via FMN and iron-sulfur (Fe-S) centers, to quinones in the respiratory chain. The immediate electron acceptor for the enzyme in this species is believed to be ubiquinone. Couples the redox reaction to proton translocation (for every two electrons transferred, four hydrogen ions are translocated across the cytoplasmic membrane), and thus conserves the redox energy in a proton gradient. This is NADH-quinone oxidoreductase subunit K from Ralstonia nicotianae (strain ATCC BAA-1114 / GMI1000) (Ralstonia solanacearum).